We begin with the raw amino-acid sequence, 306 residues long: GTPase Era (306 aa).

Residues 13–181 (YCGFIAIVGR…EKIVRESLHE (169 aa)) enclose the Era-type G domain. The segment at 21–28 (GRPNVGKS) is G1. Residue 21–28 (GRPNVGKS) coordinates GTP. Residues 47 to 51 (QTTRH) are G2. Residues 68–71 (DTPG) are G3. GTP is bound by residues 68 to 72 (DTPGL) and 130 to 133 (NKID). Residues 130-133 (NKID) form a G4 region. Positions 160–162 (ISA) are G5. The KH type-2 domain maps to 212-289 (TGDELPYSVT…HLELWVKVKS (78 aa)).

The protein belongs to the TRAFAC class TrmE-Era-EngA-EngB-Septin-like GTPase superfamily. Era GTPase family. In terms of assembly, monomer.

It is found in the cytoplasm. It localises to the cell inner membrane. In terms of biological role, an essential GTPase that binds both GDP and GTP, with rapid nucleotide exchange. Plays a role in 16S rRNA processing and 30S ribosomal subunit biogenesis and possibly also in cell cycle regulation and energy metabolism. The sequence is that of GTPase Era from Pasteurella multocida (strain Pm70).